An 82-amino-acid polypeptide reads, in one-letter code: RNA-binding protein Hfq (82 aa).

The Sm domain occupies 9–68 (DPYLNTLRKERVPVSIYLVNGIKLQGQIESFDQFVILLKNTVSQMVYKTAISTVVPSRPV).

Belongs to the Hfq family. In terms of assembly, homohexamer.

In terms of biological role, RNA chaperone that binds small regulatory RNA (sRNAs) and mRNAs to facilitate mRNA translational regulation in response to envelope stress, environmental stress and changes in metabolite concentrations. Also binds with high specificity to tRNAs. The polypeptide is RNA-binding protein Hfq (Pseudomonas aeruginosa).